The following is a 74-amino-acid chain: Putative membrane protein insertion efficiency factor (74 aa).

This sequence belongs to the UPF0161 family.

The protein resides in the cell membrane. In terms of biological role, could be involved in insertion of integral membrane proteins into the membrane. This is Putative membrane protein insertion efficiency factor from Anoxybacillus flavithermus (strain DSM 21510 / WK1).